The sequence spans 473 residues: MKTLYSLRRFYPVETLFNGTLALVGRDQETTGFAWWAGNARLINLSGKLLGAHVAHAGLIVFWAGAMNLFEVAHFVPEKPMYEQGLILLPHLATLGWGVGPGGEVIDTFPYFVSGVLHLISSAVLGFGGIYHALLGPETLEESFPFFGYVWKDRNKMTTILGIHLILLGIGAFLLVLKALYFGGVYDTWAPGGGDVRKITNLTLSPSVIFGYLLKSPFGGEGWIVSVDDLEDIIGGHVWLGSICILGGIWHILTKPFAWARRAFVWSGEAYLSYSLGALSVFGFIACCFVWFNNTAYPSEFYGPTGPEASQAQAFTFLVRDQRLGANVGSAQGPTGLGKYLMRSPTGEVIFGGETMRFWDLRAPWLEPLRGPNGLDLSRLKKDIQPWQERRSAEYMTHAPLGSLNSVGGVATEINAVNYVSPRSWLATSHFVLGFFLFVGHLWHAGRARAAAAGFEKGIDRDLEPVLSMTPLS.

A propeptide spanning residues 1–14 (MKTLYSLRRFYPVE) is cleaved from the precursor. Thr15 bears the N-acetylthreonine mark. Thr15 carries the phosphothreonine modification. The next 5 membrane-spanning stretches (helical) occupy residues 69 to 93 (LFEVAHFVPEKPMYEQGLILLPHLA), 134 to 155 (LLGPETLEESFPFFGYVWKDRN), 178 to 200 (KALYFGGVYDTWAPGGGDVRKIT), 255 to 275 (KPFAWARRAFVWSGEAYLSYS), and 291 to 312 (WFNNTAYPSEFYGPTGPEASQA). Glu367 lines the [CaMn4O5] cluster pocket. A helical transmembrane segment spans residues 447-471 (RARAAAAGFEKGIDRDLEPVLSMTP).

Belongs to the PsbB/PsbC family. PsbC subfamily. As to quaternary structure, PSII is composed of 1 copy each of membrane proteins PsbA, PsbB, PsbC, PsbD, PsbE, PsbF, PsbH, PsbI, PsbJ, PsbK, PsbL, PsbM, PsbT, PsbX, PsbY, PsbZ, Psb30/Ycf12, at least 3 peripheral proteins of the oxygen-evolving complex and a large number of cofactors. It forms dimeric complexes. It depends on Binds multiple chlorophylls and provides some of the ligands for the Ca-4Mn-5O cluster of the oxygen-evolving complex. It may also provide a ligand for a Cl- that is required for oxygen evolution. PSII binds additional chlorophylls, carotenoids and specific lipids. as a cofactor.

Its subcellular location is the plastid. It localises to the chloroplast thylakoid membrane. In terms of biological role, one of the components of the core complex of photosystem II (PSII). It binds chlorophyll and helps catalyze the primary light-induced photochemical processes of PSII. PSII is a light-driven water:plastoquinone oxidoreductase, using light energy to abstract electrons from H(2)O, generating O(2) and a proton gradient subsequently used for ATP formation. This Phalaenopsis aphrodite subsp. formosana (Moth orchid) protein is Photosystem II CP43 reaction center protein.